We begin with the raw amino-acid sequence, 312 residues long: ECF RNA polymerase sigma factor SigJ (312 aa).

Positions 6-65 (FEALRQHLMSVAYRLTGTVADAEDIVQEAWLRWDSPDTVIADPRAWLTTVVSRLGLDKLR) are sigma-70 factor domain-2. Residues 29–32 (DIVQ) carry the Polymerase core binding motif. Residues 107–155 (MVVLERLRPDQRVAFVLHDGFAVPFAEVAEVLGTSEAAARQLASRARKA) are sigma-70 factor domain-4. Positions 131 to 150 (FAEVAEVLGTSEAAARQLAS) form a DNA-binding region, H-T-H motif. Residues 293–312 (GSPLKERRAQPTGRGRHHRN) form a disordered region.

Belongs to the sigma-70 factor family. ECF subfamily. As to quaternary structure, interacts transiently with the RNA polymerase catalytic core formed by RpoA, RpoB, RpoC and RpoZ (2 alpha, 1 beta, 1 beta' and 1 omega subunit) to form the RNA polymerase holoenzyme that can initiate transcription.

Sigma factors are initiation factors that promote the attachment of RNA polymerase to specific initiation sites and are then released. Extracytoplasmic function (ECF) sigma factors are held in an inactive form by an anti-sigma factor until released, although no anti-sigma factor is known for this protein. Regulates the promoter of SigI, may not be autoregulated. This Mycobacterium tuberculosis (strain ATCC 25618 / H37Rv) protein is ECF RNA polymerase sigma factor SigJ (sigJ).